Here is a 655-residue protein sequence, read N- to C-terminus: tRNA 5-methylaminomethyl-2-thiouridine biosynthesis bifunctional protein MnmC (655 aa).

The interval 1 to 236 is tRNA (mnm(5)s(2)U34)-methyltransferase; sequence MTDPLVPAVL…KRAMLVGRFA (236 aa). The interval 260–655 is FAD-dependent cmnm(5)s(2)U34 oxidoreductase; that stretch reads IGTGLAGCAA…LRALRQGTAS (396 aa).

The protein in the N-terminal section; belongs to the methyltransferase superfamily. tRNA (mnm(5)s(2)U34)-methyltransferase family. It in the C-terminal section; belongs to the DAO family. FAD serves as cofactor.

It is found in the cytoplasm. The catalysed reaction is 5-aminomethyl-2-thiouridine(34) in tRNA + S-adenosyl-L-methionine = 5-methylaminomethyl-2-thiouridine(34) in tRNA + S-adenosyl-L-homocysteine + H(+). Its function is as follows. Catalyzes the last two steps in the biosynthesis of 5-methylaminomethyl-2-thiouridine (mnm(5)s(2)U) at the wobble position (U34) in tRNA. Catalyzes the FAD-dependent demodification of cmnm(5)s(2)U34 to nm(5)s(2)U34, followed by the transfer of a methyl group from S-adenosyl-L-methionine to nm(5)s(2)U34, to form mnm(5)s(2)U34. The chain is tRNA 5-methylaminomethyl-2-thiouridine biosynthesis bifunctional protein MnmC from Paraburkholderia phymatum (strain DSM 17167 / CIP 108236 / LMG 21445 / STM815) (Burkholderia phymatum).